Here is a 229-residue protein sequence, read N- to C-terminus: GTP cyclohydrolase 1 (229 aa).

Residues 1-21 (MTLAKPGSGSQSRMDDKAHFK) form a disordered region. Zn(2+)-binding residues include Cys116, His119, and Cys187.

Belongs to the GTP cyclohydrolase I family. As to quaternary structure, toroid-shaped homodecamer, composed of two pentamers of five dimers.

It catalyses the reaction GTP + H2O = 7,8-dihydroneopterin 3'-triphosphate + formate + H(+). It participates in cofactor biosynthesis; 7,8-dihydroneopterin triphosphate biosynthesis; 7,8-dihydroneopterin triphosphate from GTP: step 1/1. The chain is GTP cyclohydrolase 1 from Synechococcus sp. (strain JA-2-3B'a(2-13)) (Cyanobacteria bacterium Yellowstone B-Prime).